A 324-amino-acid chain; its full sequence is Antihemorrhagic factor cHLP-A (324 aa).

The N-terminal stretch at 1 to 19 is a signal peptide; that stretch reads MNSLVALVLLGQIIGSTLS. Cystatin fetuin-A-type domains follow at residues 21-130 and 141-254; these read QLGP…VKCK and RNCP…SDCV. 6 cysteine pairs are disulfide-bonded: C28–C315, C85–C96, C110–C129, C143–C146, C205–C217, and C230–C253. N204 carries an N-linked (GlcNAc...) asparagine glycan. Residue N282 is glycosylated (N-linked (GlcNAc...) asparagine).

Belongs to the fetuin family. As to quaternary structure, homodimer. Expressed by the liver.

It is found in the secreted. Potent inhibitor of hemorrhagic activity but also proteolytic activities. Inhibition occurs by formation of a non-covalent complex between this protein and the proteinases at their metalloproteinase domains. In Gloydius brevicauda (Korean slamosa snake), this protein is Antihemorrhagic factor cHLP-A.